A 189-amino-acid chain; its full sequence is Protein GrpE (189 aa).

Positions 1 to 13 (MSENKQPEQNQDL) are enriched in polar residues. The disordered stretch occupies residues 1–35 (MSENKQPEQNQDLTGEPSPEELEAAQAADEFDAMN).

This sequence belongs to the GrpE family. In terms of assembly, homodimer.

The protein resides in the cytoplasm. In terms of biological role, participates actively in the response to hyperosmotic and heat shock by preventing the aggregation of stress-denatured proteins, in association with DnaK and GrpE. It is the nucleotide exchange factor for DnaK and may function as a thermosensor. Unfolded proteins bind initially to DnaJ; upon interaction with the DnaJ-bound protein, DnaK hydrolyzes its bound ATP, resulting in the formation of a stable complex. GrpE releases ADP from DnaK; ATP binding to DnaK triggers the release of the substrate protein, thus completing the reaction cycle. Several rounds of ATP-dependent interactions between DnaJ, DnaK and GrpE are required for fully efficient folding. This is Protein GrpE from Polaromonas naphthalenivorans (strain CJ2).